Consider the following 408-residue polypeptide: Mitochondrial outer membrane protein SLC25A46 (408 aa).

2 disordered regions span residues 1-23 and 52-80; these read MHPR…EEPC and HWGE…LGAG. The span at 66–76 shows a compositional bias: low complexity; it reads LGAAGLNEEPG. Residues 86–177 form a Solcar 1 repeat; it reads QLNRFAGFGI…GIISEFTPLP (92 aa). 6 consecutive transmembrane segments (helical) span residues 93–113, 157–177, 189–209, 248–268, 304–324, and 373–393; these read FGIG…CIVL, FIVQ…TPLP, IGGH…FYSA, LLPL…HYVI, FPEL…LYPL, and LGFY…VAVL. A Solcar 2 repeat occupies 301 to 403; sequence DAYFPELIAS…QLTKIIYSTL (103 aa).

It belongs to the mitochondrial carrier (TC 2.A.29) family.

The protein resides in the mitochondrion outer membrane. Its function is as follows. Transmembrane protein of the mitochondrial outer membrane that controls mitochondrial organization. May regulate the assembly of the MICOS (mitochondrial contact site and cristae organizing system) complex which is essential to the biogenesis and dynamics of mitochondrial cristae, the inwards folds of the inner mitochondrial membrane. Through its interaction with the EMC (endoplasmic reticulum membrane protein complex), could regulate mitochondrial lipid homeostasis and thereby mitochondrial fission. The sequence is that of Mitochondrial outer membrane protein SLC25A46 from Gallus gallus (Chicken).